The following is a 576-amino-acid chain: Putative export ATP-binding/permease protein RP696 (576 aa).

Residues Leu-20–Leu-303 form the ABC transmembrane type-1 domain. The next 6 membrane-spanning stretches (helical) occupy residues Ile-21–Phe-41, Ile-61–Phe-81, Phe-135–Phe-155, Phe-158–Phe-178, Ala-242–Ile-262, and Ile-277–Leu-297. The ABC transporter domain maps to Ile-336 to Glu-572. Gly-371–Ser-378 is a binding site for ATP.

The protein belongs to the ABC transporter superfamily. As to quaternary structure, homodimer.

Its subcellular location is the cell inner membrane. Its function is as follows. Part of an ABC transporter complex. Transmembrane domains (TMD) form a pore in the inner membrane and the ATP-binding domain (NBD) is responsible for energy generation. This Rickettsia prowazekii (strain Madrid E) protein is Putative export ATP-binding/permease protein RP696.